The primary structure comprises 468 residues: Citrate synthase, mitochondrial (468 aa).

A mitochondrion-targeting transit peptide spans 1-30; the sequence is MSLISAGRVCARILGAKNSPCALIAARQAS. Catalysis depends on residues H303 and H349. R358 contacts oxaloacetate. The active site involves D404. Residues R430 and R450 each coordinate oxaloacetate.

Belongs to the citrate synthase family. Homodimer.

The protein resides in the mitochondrion matrix. It catalyses the reaction oxaloacetate + acetyl-CoA + H2O = citrate + CoA + H(+). It participates in carbohydrate metabolism; tricarboxylic acid cycle; isocitrate from oxaloacetate: step 1/2. Key enzyme of the Krebs tricarboxylic acid cycle which catalyzes the synthesis of citrate from acetyl coenzyme A and oxaloacetate. This is Citrate synthase, mitochondrial (cs) from Xenopus laevis (African clawed frog).